Consider the following 323-residue polypeptide: Elongation factor P--(R)-beta-lysine ligase (323 aa).

76-78 (SPE) is a binding site for substrate. Residues 100–102 (RNE) and Asn109 contribute to the ATP site. Tyr118 serves as a coordination point for substrate. 242-243 (EL) contributes to the ATP binding site. Glu249 is a binding site for substrate. Gly298 serves as a coordination point for ATP.

It belongs to the class-II aminoacyl-tRNA synthetase family. EpmA subfamily. Homodimer.

The catalysed reaction is D-beta-lysine + L-lysyl-[protein] + ATP = N(6)-((3R)-3,6-diaminohexanoyl)-L-lysyl-[protein] + AMP + diphosphate + H(+). Functionally, with EpmB is involved in the beta-lysylation step of the post-translational modification of translation elongation factor P (EF-P). Catalyzes the ATP-dependent activation of (R)-beta-lysine produced by EpmB, forming a lysyl-adenylate, from which the beta-lysyl moiety is then transferred to the epsilon-amino group of a conserved specific lysine residue in EF-P. This chain is Elongation factor P--(R)-beta-lysine ligase, found in Pasteurella multocida (strain Pm70).